The sequence spans 266 residues: Inositol-1-monophosphatase (266 aa).

Glu-69, Asp-86, Leu-88, and Asp-89 together coordinate Mg(2+). Glu-69 is a substrate binding site. Residues 88–91 (LDGT), Arg-185, and Asp-214 contribute to the substrate site. Asp-214 serves as a coordination point for Mg(2+).

It belongs to the inositol monophosphatase superfamily. Mg(2+) serves as cofactor.

The catalysed reaction is a myo-inositol phosphate + H2O = myo-inositol + phosphate. The chain is Inositol-1-monophosphatase (suhB) from Rhizobium meliloti (strain 1021) (Ensifer meliloti).